The sequence spans 214 residues: Probable GTP-binding protein EngB (214 aa).

Positions 30 to 204 (EGFEVAFAGR…YTVLAGWMEL (175 aa)) constitute an EngB-type G domain. GTP contacts are provided by residues 38 to 45 (GRSNAGKS), 64 to 68 (GRTQL), 82 to 85 (DLPG), 149 to 152 (TKAD), and 182 to 185 (LFSA). Mg(2+)-binding residues include Ser-45 and Thr-66.

The protein belongs to the TRAFAC class TrmE-Era-EngA-EngB-Septin-like GTPase superfamily. EngB GTPase family. Requires Mg(2+) as cofactor.

Functionally, necessary for normal cell division and for the maintenance of normal septation. The sequence is that of Probable GTP-binding protein EngB from Pseudomonas fluorescens (strain Pf0-1).